The primary structure comprises 200 residues: Recombination protein RecR (200 aa).

A C4-type zinc finger spans residues 57-72; the sequence is CSECRTFTEEDTCAIC. The 96-residue stretch at 81 to 176 folds into the Toprim domain; the sequence is GEMCIVESPA…PASRIAHGVP (96 aa).

Belongs to the RecR family.

Its function is as follows. May play a role in DNA repair. It seems to be involved in an RecBC-independent recombinational process of DNA repair. It may act with RecF and RecO. This Aliivibrio fischeri (strain ATCC 700601 / ES114) (Vibrio fischeri) protein is Recombination protein RecR.